We begin with the raw amino-acid sequence, 427 residues long: Enolase (427 aa).

Glutamine 163 provides a ligand contact to (2R)-2-phosphoglycerate. Catalysis depends on glutamate 205, which acts as the Proton donor. Residues aspartate 242, glutamate 285, and aspartate 312 each coordinate Mg(2+). (2R)-2-phosphoglycerate is bound by residues lysine 337, arginine 366, serine 367, and lysine 388. The Proton acceptor role is filled by lysine 337.

It belongs to the enolase family. Mg(2+) is required as a cofactor.

Its subcellular location is the cytoplasm. The protein localises to the secreted. It is found in the cell surface. The catalysed reaction is (2R)-2-phosphoglycerate = phosphoenolpyruvate + H2O. The protein operates within carbohydrate degradation; glycolysis; pyruvate from D-glyceraldehyde 3-phosphate: step 4/5. Its function is as follows. Catalyzes the reversible conversion of 2-phosphoglycerate (2-PG) into phosphoenolpyruvate (PEP). It is essential for the degradation of carbohydrates via glycolysis. This Ralstonia nicotianae (strain ATCC BAA-1114 / GMI1000) (Ralstonia solanacearum) protein is Enolase.